Here is a 459-residue protein sequence, read N- to C-terminus: Serine/threonine-protein kinase 12 (459 aa).

Residues 1-30 (MEEDYQQPRFTIGRQSSMAPEKIPEPSVHS) form a disordered region. ANK repeat units lie at residues 42 to 71 (DGGV…DANY), 75 to 104 (DDRT…EVDP), and 108 to 137 (WGST…KHPM). One can recognise a Protein kinase domain in the interval 102 to 417 (VDPKDRWGST…EIIKRLESIL (316 aa)). ATP-binding positions include 108 to 116 (WGSTPFADA) and Lys184. Asp281 serves as the catalytic Proton acceptor.

Belongs to the protein kinase superfamily. Ser/Thr protein kinase family. As to quaternary structure, interacts with BLUS1, PHOT1 and PHOT2. As to expression, accumulates in leaves, stems, petioles and roots, especially in guard cells.

It is found in the cytoplasm. Its subcellular location is the cytosol. The enzyme catalyses L-seryl-[protein] + ATP = O-phospho-L-seryl-[protein] + ADP + H(+). It carries out the reaction L-threonyl-[protein] + ATP = O-phospho-L-threonyl-[protein] + ADP + H(+). In terms of biological role, serine/threonine protein kinase that phosphorylates proteins on serine and threonine residues. Mediates blue light-dependent stomatal opening in guard cells by promoting plasma membrane-type ATPases (AHA1 and AHA2) phosphorylation. In Arabidopsis thaliana (Mouse-ear cress), this protein is Serine/threonine-protein kinase 12.